We begin with the raw amino-acid sequence, 113 residues long: Protein FPV195 (113 aa).

It belongs to the poxviruses A31 family.

This is Protein FPV195 from Vertebrata (FPV).